The chain runs to 72 residues: Lantibiotic Flvbeta.e (72 aa).

The propeptide at 1 to 34 (MNNKEFNMEQFKKLAAVVSEDELDEMLDENVTGA) is cleaved by FlvT. The segment at residues 36–40 (SSIPC) is a cross-link (lanthionine (Ser-Cys); by FlvM2). Ser-37 bears the 2,3-didehydroalanine (Ser); by FlvM2 mark. A 2,3-didehydrobutyrine; by FlvM2 mark is found at Thr-48 and Thr-49. 3 cross-links (beta-methyllanthionine (Thr-Cys); by FlvM2) span residues 55–61 (TTGFDWC), 63–66 (TGAC), and 67–70 (TTSC).

Contains LL-lanthionine and DL-beta-methyllanthionine, when coepressed in E.coli with the flavecin synthetase FlvM2.

The protein localises to the secreted. Functionally, lanthionine-containing peptide antibiotic (lantibiotic) that is probably active on Gram-positive bacteria, since its analog [Del1]Flvbeta.e shows antibacterial activity against Gram-positive bacteria. This activity is not synergistically enhanced by [Del2]Flvalpha.a, an analog of Flvalpha.a, which is encoded by the same operon than Flvbeta.e. The bactericidal activity of lantibiotics is based on depolarization of energized bacterial cytoplasmic membranes, initiated by the formation of aqueous transmembrane pores. This chain is Lantibiotic Flvbeta.e, found in Ruminococcus flavefaciens.